Reading from the N-terminus, the 330-residue chain is Holliday junction branch migration complex subunit RuvB (330 aa).

The large ATPase domain (RuvB-L) stretch occupies residues 1–181 (MEDRLVGCRL…FGVINKLELY (181 aa)). ATP-binding positions include Leu-20, Arg-21, Gly-62, Lys-65, Thr-66, Thr-67, 128–130 (EDY), Arg-171, Tyr-181, and Arg-218. Mg(2+) is bound at residue Thr-66. The small ATPAse domain (RuvB-S) stretch occupies residues 182-252 (SVEELGQIVK…IARTGLEALE (71 aa)). A head domain (RuvB-H) region spans residues 255 to 330 (EIGLDAVDRN…AYEHFGLKYE (76 aa)). Positions 310 and 315 each coordinate DNA.

This sequence belongs to the RuvB family. In terms of assembly, homohexamer. Forms an RuvA(8)-RuvB(12)-Holliday junction (HJ) complex. HJ DNA is sandwiched between 2 RuvA tetramers; dsDNA enters through RuvA and exits via RuvB. An RuvB hexamer assembles on each DNA strand where it exits the tetramer. Each RuvB hexamer is contacted by two RuvA subunits (via domain III) on 2 adjacent RuvB subunits; this complex drives branch migration. In the full resolvosome a probable DNA-RuvA(4)-RuvB(12)-RuvC(2) complex forms which resolves the HJ.

It is found in the cytoplasm. The enzyme catalyses ATP + H2O = ADP + phosphate + H(+). Its function is as follows. The RuvA-RuvB-RuvC complex processes Holliday junction (HJ) DNA during genetic recombination and DNA repair, while the RuvA-RuvB complex plays an important role in the rescue of blocked DNA replication forks via replication fork reversal (RFR). RuvA specifically binds to HJ cruciform DNA, conferring on it an open structure. The RuvB hexamer acts as an ATP-dependent pump, pulling dsDNA into and through the RuvAB complex. RuvB forms 2 homohexamers on either side of HJ DNA bound by 1 or 2 RuvA tetramers; 4 subunits per hexamer contact DNA at a time. Coordinated motions by a converter formed by DNA-disengaged RuvB subunits stimulates ATP hydrolysis and nucleotide exchange. Immobilization of the converter enables RuvB to convert the ATP-contained energy into a lever motion, pulling 2 nucleotides of DNA out of the RuvA tetramer per ATP hydrolyzed, thus driving DNA branch migration. The RuvB motors rotate together with the DNA substrate, which together with the progressing nucleotide cycle form the mechanistic basis for DNA recombination by continuous HJ branch migration. Branch migration allows RuvC to scan DNA until it finds its consensus sequence, where it cleaves and resolves cruciform DNA. In Acetivibrio thermocellus (strain ATCC 27405 / DSM 1237 / JCM 9322 / NBRC 103400 / NCIMB 10682 / NRRL B-4536 / VPI 7372) (Clostridium thermocellum), this protein is Holliday junction branch migration complex subunit RuvB.